Reading from the N-terminus, the 455-residue chain is uncharacterized protein (455 aa).

12 helical membrane-spanning segments follow: residues 19-39 (FSLF…MFMG), 63-83 (ILNL…VIIS), 106-126 (FFIS…LLHM), 140-160 (FLQV…FSAI), 173-195 (VTIG…LFGF), 200-222 (VAGV…IVIV), 265-285 (MIVT…KVYT), 288-308 (ITMF…ILIG), 324-344 (MKSL…MTIF), 348-368 (LIGL…LIAM), 388-408 (AAGD…GIGL), and 410-430 (LAYL…ISFI).

Belongs to the multi antimicrobial extrusion (MATE) (TC 2.A.66.1) family.

The protein resides in the cell membrane. This is an uncharacterized protein from Bacillus subtilis (strain 168).